The sequence spans 244 residues: Cobalt transport protein CbiM (244 aa).

Positions 1 to 28 are cleaved as a signal peptide; that stretch reads MKKLWKFIPFVLMGVIYFTLTNPESAHA. Transmembrane regions (helical) follow at residues 37–57, 71–91, 103–123, 135–155, 166–186, and 206–226; these read PVKWAVFWLIVFIPFLVLGLI, LLLALCAAFIFVLSALKIPSV, LATVMFGPLVVSVLGVIVLLF, TLGANAMSMAVIGPMVGFVVY, SVSIFLCAMTADLATYFTTSV, and FMAIFCVTQVPIAIAEGLLTV.

The protein belongs to the CbiM family. Forms an energy-coupling factor (ECF) transporter complex composed of an ATP-binding protein (A component, CbiO), a transmembrane protein (T component, CbiQ) and 2 possible substrate-capture proteins (S components, CbiM and CbiN) of unknown stoichimetry.

The protein resides in the cell membrane. Its pathway is cofactor biosynthesis; adenosylcobalamin biosynthesis. Part of the energy-coupling factor (ECF) transporter complex CbiMNOQ involved in cobalt import. This Listeria seeligeri serovar 1/2b (strain ATCC 35967 / DSM 20751 / CCM 3970 / CCUG 15530 / CIP 100100 / LMG 11386 / NCTC 11856 / SLCC 3954 / 1120) protein is Cobalt transport protein CbiM.